The primary structure comprises 90 residues: Small ribosomal subunit protein uS15 (90 aa).

This sequence belongs to the universal ribosomal protein uS15 family. Part of the 30S ribosomal subunit. Forms a bridge to the 50S subunit in the 70S ribosome, contacting the 23S rRNA.

Its function is as follows. One of the primary rRNA binding proteins, it binds directly to 16S rRNA where it helps nucleate assembly of the platform of the 30S subunit by binding and bridging several RNA helices of the 16S rRNA. Functionally, forms an intersubunit bridge (bridge B4) with the 23S rRNA of the 50S subunit in the ribosome. In Aquifex aeolicus (strain VF5), this protein is Small ribosomal subunit protein uS15.